We begin with the raw amino-acid sequence, 134 residues long: Small ribosomal subunit protein uS8c (134 aa).

The protein belongs to the universal ribosomal protein uS8 family. As to quaternary structure, part of the 30S ribosomal subunit.

The protein resides in the plastid. Its subcellular location is the chloroplast. One of the primary rRNA binding proteins, it binds directly to 16S rRNA central domain where it helps coordinate assembly of the platform of the 30S subunit. The polypeptide is Small ribosomal subunit protein uS8c (rps8) (Phaseolus vulgaris (Kidney bean)).